The chain runs to 45 residues: Globin, minor monomeric component (45 aa).

A Globin domain is found at 1 to 45 (GLSAAERQVVASCWKDIAGADXGAGVGKEXLIKFISAAPEMAAVF).

This sequence belongs to the globin family. As to quaternary structure, monomer.

In Glycera dibranchiata (Bloodworm), this protein is Globin, minor monomeric component.